The primary structure comprises 506 residues: uncharacterized protein (506 aa).

This sequence belongs to the Mg-chelatase subunits D/I family. ComM subfamily.

This is an uncharacterized protein from Salmonella typhimurium (strain LT2 / SGSC1412 / ATCC 700720).